The chain runs to 535 residues: uncharacterized protein (535 aa).

A helical transmembrane segment spans residues 17 to 37 (IVLLCMIGFFCTTFMRIHFAL). Asparagine 44 and asparagine 61 each carry an N-linked (GlcNAc...) asparagine glycan. 6 helical membrane passes run 107–127 (LIFS…MFFI), 144–164 (ILVT…SVFL), 167–187 (IGMG…IGNW), 199–219 (IFTL…AAVC), 225–245 (WPAT…LWFF), and 292–312 (AFLG…LFQI). An N-linked (GlcNAc...) asparagine glycan is attached at asparagine 329. 5 consecutive transmembrane segments (helical) span residues 331–351 (TFTA…GIGI), 368–388 (VSHG…AFFV), 395–415 (TGLI…SGFY), 429–451 (MSAI…MSMF), and 463–483 (IFIG…LFGS).

It belongs to the major facilitator superfamily. Sodium/anion cotransporter family.

Its subcellular location is the membrane. This is an uncharacterized protein from Caenorhabditis elegans.